Here is a 282-residue protein sequence, read N- to C-terminus: 1,4-dihydroxy-6-naphtoate synthase (282 aa).

Residues 57–59 and 109–110 each bind substrate; these read KVS and TA. H153 serves as the catalytic Proton acceptor.

This sequence belongs to the MqnA/MqnD family. MqnD subfamily.

The catalysed reaction is cyclic dehypoxanthinylfutalosinate = 1,4-dihydroxy-6-naphthoate + dihydroxyacetone. The protein operates within quinol/quinone metabolism; menaquinone biosynthesis. In terms of biological role, catalyzes the conversion of cyclic dehypoxanthine futalosine (cyclic DHFL) into 1,4-dihydroxy-6-naphthoate, a step in the biosynthesis of menaquinone (MK, vitamin K2). The chain is 1,4-dihydroxy-6-naphtoate synthase from Streptomyces coelicolor (strain ATCC BAA-471 / A3(2) / M145).